Reading from the N-terminus, the 153-residue chain is Endoribonuclease YbeY (153 aa).

His-114, His-118, and His-124 together coordinate Zn(2+).

The protein belongs to the endoribonuclease YbeY family. Zn(2+) is required as a cofactor.

Its subcellular location is the cytoplasm. Single strand-specific metallo-endoribonuclease involved in late-stage 70S ribosome quality control and in maturation of the 3' terminus of the 16S rRNA. In Finegoldia magna (strain ATCC 29328 / DSM 20472 / WAL 2508) (Peptostreptococcus magnus), this protein is Endoribonuclease YbeY.